Reading from the N-terminus, the 123-residue chain is MADNNKMSREEAGRKGGETTSKNHDKEFYQEIGQKGGEATSKNHDKEFYQEIGEKGGEATSKNHDKEFYQEIGEKGGEATSENHDKEFYQEIGRKGGEATSKNHDKEFYQEIGSKGGNARNND.

Composition is skewed to basic and acidic residues over residues 1 to 29 (MADN…KEFY) and 41 to 109 (SKNH…KEFY). Residues 1 to 123 (MADNNKMSRE…SKGGNARNND (123 aa)) form a disordered region. 5 repeat units span residues 13–32 (GRKG…YQEI), 33–52 (GQKG…YQEI), 53–72 (GEKG…YQEI), 73–92 (GEKG…YQEI), and 93–112 (GRKG…YQEI). The segment at 13–120 (GRKGGETTSK…EIGSKGGNAR (108 aa)) is 5 X 20 AA approximate tandem repeats.

Its function is as follows. Involved in an adaptive response to nutrient deprivation other than sporulation. The sequence is that of Glucose starvation-inducible protein B (gsiB) from Bacillus subtilis (strain 168).